The following is a 303-amino-acid chain: Centromere protein O (303 aa).

A coiled-coil region spans residues alanine 38–alanine 77.

This sequence belongs to the CENP-O/MCM21 family.

It is found in the nucleus. The protein resides in the chromosome. Its subcellular location is the centromere. Its function is as follows. Probable component of a centromeric complex involved in assembly of kinetochore proteins, mitotic progression and chromosome segregation. This is Centromere protein O (cenpo) from Xenopus tropicalis (Western clawed frog).